A 143-amino-acid chain; its full sequence is 3-dehydroquinate dehydratase (143 aa).

The active-site Proton acceptor is the Tyr22. The substrate site is built by Asn73, His79, and Asp86. His99 acts as the Proton donor in catalysis. Residues 100–101 (IS) and Arg110 contribute to the substrate site.

Belongs to the type-II 3-dehydroquinase family. In terms of assembly, homododecamer.

The enzyme catalyses 3-dehydroquinate = 3-dehydroshikimate + H2O. Its pathway is metabolic intermediate biosynthesis; chorismate biosynthesis; chorismate from D-erythrose 4-phosphate and phosphoenolpyruvate: step 3/7. Its function is as follows. Catalyzes a trans-dehydration via an enolate intermediate. This Salinispora arenicola (strain CNS-205) protein is 3-dehydroquinate dehydratase.